We begin with the raw amino-acid sequence, 1203 residues long: DNA-directed RNA polymerase subunit beta (1203 aa).

The disordered stretch occupies residues 1167 to 1203 (LSKYAQQQEEQRKAAAQTDESKTAPATKNESQPNTQD). The span at 1190-1203 (APATKNESQPNTQD) shows a compositional bias: polar residues.

It belongs to the RNA polymerase beta chain family. As to quaternary structure, the RNAP catalytic core consists of 2 alpha, 1 beta, 1 beta' and 1 omega subunit. When a sigma factor is associated with the core the holoenzyme is formed, which can initiate transcription.

The catalysed reaction is RNA(n) + a ribonucleoside 5'-triphosphate = RNA(n+1) + diphosphate. DNA-dependent RNA polymerase catalyzes the transcription of DNA into RNA using the four ribonucleoside triphosphates as substrates. The protein is DNA-directed RNA polymerase subunit beta of Levilactobacillus brevis (strain ATCC 367 / BCRC 12310 / CIP 105137 / JCM 1170 / LMG 11437 / NCIMB 947 / NCTC 947) (Lactobacillus brevis).